We begin with the raw amino-acid sequence, 1024 residues long: Probable alpha-mannosidase At5g13980 (1024 aa).

A signal peptide spans 1-21 (MDLAKFLCWIVLLLGISLVES). Asparagine 27 carries an N-linked (GlcNAc...) asparagine glycan. The Zn(2+) site is built by histidine 46 and aspartate 48. Asparagine 63 carries an N-linked (GlcNAc...) asparagine glycan. Residue aspartate 168 coordinates Zn(2+). Asparagine 278 carries N-linked (GlcNAc...) asparagine glycosylation. Zn(2+) is bound at residue histidine 410. Residues cysteine 461 and cysteine 469 are joined by a disulfide bond. Asparagine 465, asparagine 475, asparagine 637, asparagine 658, asparagine 733, and asparagine 823 each carry an N-linked (GlcNAc...) asparagine glycan. Cysteine 827 and cysteine 832 are joined by a disulfide.

It belongs to the glycosyl hydrolase 38 family. As to quaternary structure, homodimer. The cofactor is Zn(2+).

The catalysed reaction is Hydrolysis of terminal, non-reducing alpha-D-mannose residues in alpha-D-mannosides.. Functionally, liberates mannose from p-nitrophenyl-alpha-D-mannoside in vitro. This Arabidopsis thaliana (Mouse-ear cress) protein is Probable alpha-mannosidase At5g13980.